Here is a 692-residue protein sequence, read N- to C-terminus: Ino eighty subunit 1 (692 aa).

Positions 1 to 25 are enriched in basic and acidic residues; it reads MGKRVYDPIHDTFQLREDNSDETKA. A disordered region spans residues 1–133; the sequence is MGKRVYDPIH…RHLKKPDGEP (133 aa). The residue at position 27 (serine 27) is a Phosphoserine. Over residues 28 to 56 the composition is skewed to polar residues; that stretch reads PMQSVKSGSQEEASPSSIQSETETVTTKS. A compositionally biased stretch (acidic residues) spans 64-80; it reads EIDDKNDDDSTQSEEEN. Residues 97–109 are compositionally biased toward polar residues; that stretch reads GASTATGPVTTNT. Positions 340–385 form a coiled coil; the sequence is SKYVEVESKAQEQDMVDEQNEVKETEAENEKQESKAAYATTLFDIL. Residues 465–485 are compositionally biased toward basic and acidic residues; it reads FMSKMEEGRKRERTNVTEVKK. A disordered region spans residues 465 to 550; that stretch reads FMSKMEEGRK…VTPAAPTETE (86 aa). Phosphoserine is present on residues serine 487, serine 493, and serine 504. Positions 493-504 are enriched in acidic residues; the sequence is SEEDGEGEDDKS. Position 507 is a phosphothreonine (threonine 507). Residues 513-528 show a composition bias toward polar residues; the sequence is SLLTPTPILESSSPMT.

In terms of assembly, component of the chromatin-remodeling INO80 complex, at least composed of ARP4, ARP5, ARP8, RVB1, RVB2, TAF14, NHP10, IES1, IES3, IES4, IES6, ACT1, IES2, IES5 and INO80.

It is found in the nucleus. In terms of biological role, probably involved in transcription regulation via its interaction with the INO80 complex, a chromatin-remodeling complex. The sequence is that of Ino eighty subunit 1 (IES1) from Saccharomyces cerevisiae (strain ATCC 204508 / S288c) (Baker's yeast).